A 147-amino-acid polypeptide reads, in one-letter code: Large ribosomal subunit protein uL13 (147 aa).

Belongs to the universal ribosomal protein uL13 family. Part of the 50S ribosomal subunit.

Its function is as follows. This protein is one of the early assembly proteins of the 50S ribosomal subunit, although it is not seen to bind rRNA by itself. It is important during the early stages of 50S assembly. This is Large ribosomal subunit protein uL13 from Mycobacterium leprae (strain Br4923).